A 169-amino-acid polypeptide reads, in one-letter code: NAD(P)H-quinone oxidoreductase subunit J, chloroplastic (169 aa).

The protein belongs to the complex I 30 kDa subunit family. NDH is composed of at least 16 different subunits, 5 of which are encoded in the nucleus.

It localises to the plastid. The protein localises to the chloroplast thylakoid membrane. It catalyses the reaction a plastoquinone + NADH + (n+1) H(+)(in) = a plastoquinol + NAD(+) + n H(+)(out). The enzyme catalyses a plastoquinone + NADPH + (n+1) H(+)(in) = a plastoquinol + NADP(+) + n H(+)(out). Functionally, NDH shuttles electrons from NAD(P)H:plastoquinone, via FMN and iron-sulfur (Fe-S) centers, to quinones in the photosynthetic chain and possibly in a chloroplast respiratory chain. The immediate electron acceptor for the enzyme in this species is believed to be plastoquinone. Couples the redox reaction to proton translocation, and thus conserves the redox energy in a proton gradient. The polypeptide is NAD(P)H-quinone oxidoreductase subunit J, chloroplastic (Marchantia polymorpha (Common liverwort)).